Here is a 285-residue protein sequence, read N- to C-terminus: 4-hydroxybenzoate octaprenyltransferase (285 aa).

The next 7 membrane-spanning stretches (helical) occupy residues 20 to 37 (IGIYLVLWPALWALWLAA), 96 to 116 (FFFVLCLLAFGLVLFLNPFTI), 138 to 158 (WPQAFLGAAFAWAIPMAFAAI), 166 to 186 (AWVIFGVTLVWALVYDTAYAV), 211 to 231 (IIGFFQAIMLLGFLWIGDLFG), 234 to 254 (WLYYGSVLIAAGFFVYHQYLL), and 262 to 282 (AFKAFLNNHWVGLVILIGIML).

It belongs to the UbiA prenyltransferase family. Mg(2+) serves as cofactor.

It localises to the cell inner membrane. The catalysed reaction is all-trans-octaprenyl diphosphate + 4-hydroxybenzoate = 4-hydroxy-3-(all-trans-octaprenyl)benzoate + diphosphate. It functions in the pathway cofactor biosynthesis; ubiquinone biosynthesis. Functionally, catalyzes the prenylation of para-hydroxybenzoate (PHB) with an all-trans polyprenyl group. Mediates the second step in the final reaction sequence of ubiquinone-8 (UQ-8) biosynthesis, which is the condensation of the polyisoprenoid side chain with PHB, generating the first membrane-bound Q intermediate 3-octaprenyl-4-hydroxybenzoate. This is 4-hydroxybenzoate octaprenyltransferase from Hydrogenovibrio crunogenus (strain DSM 25203 / XCL-2) (Thiomicrospira crunogena).